The chain runs to 210 residues: MDKKKDISMSVIKRLPKYHRYLGNLMRNDVDRISSKELSEKIGFTASQIRQDLNCFGDFGQQGYGYNVSELYSQMCNILGLTKVYRTVIIGAGNIGQAISNYIGFEKLGFELRAIFDINPKLIGISIRDIEIRDIDYLGDYLRENVIDIGIICVPSNNGQKVCNILVKNGVKGIWNFAPVDLIVPEDVKVENVHLSDSLLTLSCLLNDIE.

The segment at residues 17-56 (KYHRYLGNLMRNDVDRISSKELSEKIGFTASQIRQDLNCF) is a DNA-binding region (H-T-H motif). Residue 91–96 (GAGNIG) participates in NAD(+) binding.

This sequence belongs to the transcriptional regulatory Rex family. In terms of assembly, homodimer.

Its subcellular location is the cytoplasm. Modulates transcription in response to changes in cellular NADH/NAD(+) redox state. The protein is Redox-sensing transcriptional repressor Rex of Clostridium kluyveri (strain ATCC 8527 / DSM 555 / NBRC 12016 / NCIMB 10680 / K1).